We begin with the raw amino-acid sequence, 275 residues long: uncharacterized protein (275 aa).

NAD(+)-binding positions include 20 to 22 (RAQ), 41 to 42 (DI), 80 to 81 (DI), and asparagine 107. Serine 160 provides a ligand contact to substrate. Residue tyrosine 173 is the Proton acceptor of the active site. NAD(+) is bound by residues lysine 177 and 206–208 (VDT).

This sequence belongs to the short-chain dehydrogenases/reductases (SDR) family.

This is an uncharacterized protein from Mycobacterium tuberculosis (strain CDC 1551 / Oshkosh).